Reading from the N-terminus, the 241-residue chain is Uridylate kinase (241 aa).

Position 15–18 (15–18 (KLSG)) interacts with ATP. Residues 23–28 (GAEGFG) are involved in allosteric activation by GTP. Glycine 57 contributes to the UMP binding site. Residues glycine 58 and arginine 62 each coordinate ATP. Residues aspartate 77 and 138–145 (TGNPFFTT) each bind UMP. Threonine 165, tyrosine 171, and aspartate 174 together coordinate ATP.

This sequence belongs to the UMP kinase family. As to quaternary structure, homohexamer.

The protein resides in the cytoplasm. It carries out the reaction UMP + ATP = UDP + ADP. It functions in the pathway pyrimidine metabolism; CTP biosynthesis via de novo pathway; UDP from UMP (UMPK route): step 1/1. With respect to regulation, allosterically activated by GTP. Inhibited by UTP. Functionally, catalyzes the reversible phosphorylation of UMP to UDP. The sequence is that of Uridylate kinase from Serratia proteamaculans (strain 568).